Reading from the N-terminus, the 165-residue chain is Nucleotide-binding protein Syncc9902_1708 (165 aa).

Belongs to the YajQ family.

In terms of biological role, nucleotide-binding protein. The sequence is that of Nucleotide-binding protein Syncc9902_1708 from Synechococcus sp. (strain CC9902).